Reading from the N-terminus, the 231-residue chain is Ribonuclease 3 (231 aa).

Positions Ile7–Gly135 constitute an RNase III domain. Glu48 contributes to the Mg(2+) binding site. Asp52 is a catalytic residue. Asn121 and Glu124 together coordinate Mg(2+). The active site involves Glu124. The region spanning Asn160–Asn229 is the DRBM domain.

The protein belongs to the ribonuclease III family. Homodimer. Requires Mg(2+) as cofactor.

Its subcellular location is the cytoplasm. The catalysed reaction is Endonucleolytic cleavage to 5'-phosphomonoester.. Its function is as follows. Digests double-stranded RNA. Involved in the processing of primary rRNA transcript to yield the immediate precursors to the large and small rRNAs (23S and 16S). Processes some mRNAs, and tRNAs when they are encoded in the rRNA operon. Processes pre-crRNA and tracrRNA of type II CRISPR loci if present in the organism. This is Ribonuclease 3 from Chlamydia trachomatis serovar L2 (strain ATCC VR-902B / DSM 19102 / 434/Bu).